The sequence spans 205 residues: Putative 3-methyladenine DNA glycosylase (205 aa).

It belongs to the DNA glycosylase MPG family.

The sequence is that of Putative 3-methyladenine DNA glycosylase from Bacillus cereus (strain AH187).